We begin with the raw amino-acid sequence, 540 residues long: Chaperonin GroEL (540 aa).

ATP contacts are provided by residues 29–32, 86–90, glycine 413, and aspartate 493; these read TLGP and DGTTT. A disordered region spans residues 520-540; that stretch reads AEKPEPKPAPGPADPGAGMDF.

The protein belongs to the chaperonin (HSP60) family. Forms a cylinder of 14 subunits composed of two heptameric rings stacked back-to-back. Interacts with the co-chaperonin GroES.

The protein resides in the cytoplasm. The enzyme catalyses ATP + H2O + a folded polypeptide = ADP + phosphate + an unfolded polypeptide.. Together with its co-chaperonin GroES, plays an essential role in assisting protein folding. The GroEL-GroES system forms a nano-cage that allows encapsulation of the non-native substrate proteins and provides a physical environment optimized to promote and accelerate protein folding. The chain is Chaperonin GroEL from Tropheryma whipplei (strain TW08/27) (Whipple's bacillus).